A 542-amino-acid polypeptide reads, in one-letter code: MVSLLRCPSSKPYSSLICSLTLGAVVALSGVAYAEETKPAETVPVVTPPKVISQPATKNQVRFTKTGAFDSDTVVKIAKRLAAKPYVALKDPLPAGLAKLSYDEYRDIRFNPTASIWRDQGVPFQMQMFHRGFYFQDLIEIAIVEGQNATHLAYEPKYFTAGEVITQALPNDDIGYSGFRIHNQLNTNGVFDELMVFQGASYFRALGKGNAYGLSSRGLALKTADAEGEEFPIFRAFWVERPYNDSNLIVVHALLDSPSVAGAYTFSVRPGDNTLIDVEATLFPRVELSKVGLAPSTSMFLHSLNGRHDTDDFRPEVHDSDGLLMLNGRGEHLWRPLANPRQLQVSAFSDNSPQGFGLIQRERDYASYQDLEAHYERRPSLWIEPVGNWGQGSVVLTEIPTESEIHDNIVSYWKPRQPIPAGSEFHFAYRMSWGDEPAAKVGAVHVSRSASGRADIAKATPRRLFVVDYQIEGPMTDEMPVAKVEASGGVVTNVVIARNAAKNGYRLAFELEPEDKELIELRAELKFPTPRQVETWLYRWTL.

The signal sequence occupies residues 1-34 (MVSLLRCPSSKPYSSLICSLTLGAVVALSGVAYA).

It belongs to the OpgD/OpgG family.

It localises to the periplasm. The protein operates within glycan metabolism; osmoregulated periplasmic glucan (OPG) biosynthesis. Functionally, involved in the biosynthesis of osmoregulated periplasmic glucans (OPGs). This Shewanella baltica (strain OS155 / ATCC BAA-1091) protein is Glucans biosynthesis protein G.